We begin with the raw amino-acid sequence, 228 residues long: Probable septum site-determining protein MinC (228 aa).

This sequence belongs to the MinC family. As to quaternary structure, interacts with MinD and FtsZ.

Functionally, cell division inhibitor that blocks the formation of polar Z ring septums. Rapidly oscillates between the poles of the cell to destabilize FtsZ filaments that have formed before they mature into polar Z rings. Prevents FtsZ polymerization. The polypeptide is Probable septum site-determining protein MinC (Bacillus anthracis (strain A0248)).